A 313-amino-acid polypeptide reads, in one-letter code: Ribosomal RNA small subunit methyltransferase H (313 aa).

Residues 35–37 (GGH), Asp-55, Phe-80, Asp-102, and Gln-109 each bind S-adenosyl-L-methionine.

The protein belongs to the methyltransferase superfamily. RsmH family.

Its subcellular location is the cytoplasm. It carries out the reaction cytidine(1402) in 16S rRNA + S-adenosyl-L-methionine = N(4)-methylcytidine(1402) in 16S rRNA + S-adenosyl-L-homocysteine + H(+). Its function is as follows. Specifically methylates the N4 position of cytidine in position 1402 (C1402) of 16S rRNA. The protein is Ribosomal RNA small subunit methyltransferase H of Shewanella frigidimarina (strain NCIMB 400).